The following is a 429-amino-acid chain: MKKQRNLRSMAAQAVEQVVEQGQSLSNILPPLQQKVSDKDKALLQELCFGVLRTLSQLDWLINKLMARPMTGKQRTVHYLIMVGLYQLLYTRIPPHAALAETVEGAVAIKRPQLKGLINGVLRQFQRQQEELLAEFNASDARYLHPSWLLKRLQKAYPEQWQSIIEANNQRPPMWLRVNRTHHSRDSWLALLDEAGMKGFPHADYPDAVRLETPAPVHVLPGFEEGWVTVQDASAQGCMAWLAPQNGEHILDLCAAPGGKTTHILEVAPEAQVVAVDIDEQRLSRVYDNLKRLGMKATVKQGDGRYPSQWCGEQQFDRILLDAPCSATGVIRRHPDIKWLRRDRDIPELAQLQSEILDAIWPHLKSGGILIYATCSVLPEENSLQIKAFLQRTADAELCETGTPEQPGKQNLPGAEEGDGFFYAKLIKK.

Residues 254-260, D277, D303, and D322 each bind S-adenosyl-L-methionine; that span reads CAAPGGK. The active-site Nucleophile is the C375.

This sequence belongs to the class I-like SAM-binding methyltransferase superfamily. RsmB/NOP family.

Its subcellular location is the cytoplasm. The enzyme catalyses cytidine(967) in 16S rRNA + S-adenosyl-L-methionine = 5-methylcytidine(967) in 16S rRNA + S-adenosyl-L-homocysteine + H(+). Specifically methylates the cytosine at position 967 (m5C967) of 16S rRNA. This chain is Ribosomal RNA small subunit methyltransferase B, found in Escherichia fergusonii (strain ATCC 35469 / DSM 13698 / CCUG 18766 / IAM 14443 / JCM 21226 / LMG 7866 / NBRC 102419 / NCTC 12128 / CDC 0568-73).